The sequence spans 161 residues: MNVKGRVFKYGDNVDTDVIIPARYLNTSNHKELASHCMEDIDKEFVNNVKDGDIIVANKNFGCGSSREHAPIAIKAAGISCVIASTFARIFYRNSINIGLPILECDEAVKNINHGDELEVDFSTGIIKNLSKNEQYQGEAFPEFMQKIIDNDGLIGYIRNK.

It belongs to the LeuD family. LeuD type 2 subfamily. Heterodimer of LeuC and LeuD.

It catalyses the reaction (2R,3S)-3-isopropylmalate = (2S)-2-isopropylmalate. It functions in the pathway amino-acid biosynthesis; L-leucine biosynthesis; L-leucine from 3-methyl-2-oxobutanoate: step 2/4. In terms of biological role, catalyzes the isomerization between 2-isopropylmalate and 3-isopropylmalate, via the formation of 2-isopropylmaleate. In Clostridium botulinum (strain Eklund 17B / Type B), this protein is 3-isopropylmalate dehydratase small subunit.